The following is a 373-amino-acid chain: Beta sliding clamp homolog GriR (373 aa).

This sequence belongs to the beta sliding clamp family. Forms a ring-shaped head-to-tail homodimer around DNA which binds and tethers DNA polymerases and other proteins to the DNA. The DNA replisome complex has a single clamp-loading complex (3 tau and 1 each of delta, delta', psi and chi subunits) which binds 3 Pol III cores (1 core on the leading strand and 2 on the lagging strand) each with a beta sliding clamp dimer. Additional proteins in the replisome are other copies of gamma, psi and chi, Ssb, DNA helicase and RNA primase.

It is found in the cytoplasm. In terms of biological role, a homolog of the beta sliding clamp protein encoded within the biosynthetic cluster for griselimycin synthesis. Upon expression in S.coelicolor A3(2), which is susceptible to this antibiotic, confers resistance to griselimycin. The beta sliding clamp confers DNA tethering and processivity to DNA polymerases and other proteins. Acts as a clamp, forming a ring around DNA (a reaction catalyzed by the clamp-loading complex) which diffuses in an ATP-independent manner freely and bidirectionally along dsDNA. Initially characterized for its ability to contact the catalytic subunit of DNA polymerase III (Pol III), a complex, multichain enzyme responsible for most of the replicative synthesis in bacteria; Pol III exhibits 3'-5' exonuclease proofreading activity. The beta chain is required for initiation of replication as well as for processivity of DNA replication. The sequence is that of Beta sliding clamp homolog GriR from Streptomyces muensis.